The chain runs to 328 residues: GMP reductase (328 aa).

Cys176 acts as the Thioimidate intermediate in catalysis. An NADP(+)-binding site is contributed by 205–228 (IIADGGIRTHGDIAKSIRFGASMI).

This sequence belongs to the IMPDH/GMPR family. GuaC type 2 subfamily.

The enzyme catalyses IMP + NH4(+) + NADP(+) = GMP + NADPH + 2 H(+). Catalyzes the irreversible NADPH-dependent deamination of GMP to IMP. It functions in the conversion of nucleobase, nucleoside and nucleotide derivatives of G to A nucleotides, and in maintaining the intracellular balance of A and G nucleotides. In Streptococcus pneumoniae (strain Taiwan19F-14), this protein is GMP reductase.